A 264-amino-acid chain; its full sequence is MKQYLELMQKVLDEGTQKNDRTGTGTLSIFGHQMRFNLQDGFPLVTTKRCHLRSIIHELLWFLQGDTNIAYLHENNVTIWDEWADENGDLGPVYGKQWRAWPTPDGRHIDQITTVLNQLKNDPDSRRIIVSAWNVGELDKMALAPCHAFFQFYVADGKLSCQLYQRSCDVFLGLPFNIASYALLVHMMAQQCDLEVGDFVWTGGDTHLYSNHMDQTHLQLSREPRPLPKLIIKRKPESIFDYRFEDFEIEGYDPHPGVKAPVAI.

Residue R21 participates in dUMP binding. H51 contacts (6R)-5,10-methylene-5,6,7,8-tetrahydrofolate. Position 126-127 (126-127 (RR)) interacts with dUMP. C146 functions as the Nucleophile in the catalytic mechanism. Residues 166 to 169 (RSCD), N177, and 207 to 209 (HLY) each bind dUMP. Residue D169 participates in (6R)-5,10-methylene-5,6,7,8-tetrahydrofolate binding. A263 lines the (6R)-5,10-methylene-5,6,7,8-tetrahydrofolate pocket.

Belongs to the thymidylate synthase family. Bacterial-type ThyA subfamily. In terms of assembly, homodimer.

The protein localises to the cytoplasm. It carries out the reaction dUMP + (6R)-5,10-methylene-5,6,7,8-tetrahydrofolate = 7,8-dihydrofolate + dTMP. The protein operates within pyrimidine metabolism; dTTP biosynthesis. Functionally, catalyzes the reductive methylation of 2'-deoxyuridine-5'-monophosphate (dUMP) to 2'-deoxythymidine-5'-monophosphate (dTMP) while utilizing 5,10-methylenetetrahydrofolate (mTHF) as the methyl donor and reductant in the reaction, yielding dihydrofolate (DHF) as a by-product. This enzymatic reaction provides an intracellular de novo source of dTMP, an essential precursor for DNA biosynthesis. The polypeptide is Thymidylate synthase (Shigella flexneri serotype 5b (strain 8401)).